The following is a 515-amino-acid chain: Bifunctional purine biosynthesis protein PurH (515 aa).

Residues 1–145 (MTKRALISVS…KNHASVTVVV (145 aa)) form the MGS-like domain.

This sequence belongs to the PurH family.

The catalysed reaction is (6R)-10-formyltetrahydrofolate + 5-amino-1-(5-phospho-beta-D-ribosyl)imidazole-4-carboxamide = 5-formamido-1-(5-phospho-D-ribosyl)imidazole-4-carboxamide + (6S)-5,6,7,8-tetrahydrofolate. It catalyses the reaction IMP + H2O = 5-formamido-1-(5-phospho-D-ribosyl)imidazole-4-carboxamide. It participates in purine metabolism; IMP biosynthesis via de novo pathway; 5-formamido-1-(5-phospho-D-ribosyl)imidazole-4-carboxamide from 5-amino-1-(5-phospho-D-ribosyl)imidazole-4-carboxamide (10-formyl THF route): step 1/1. The protein operates within purine metabolism; IMP biosynthesis via de novo pathway; IMP from 5-formamido-1-(5-phospho-D-ribosyl)imidazole-4-carboxamide: step 1/1. This chain is Bifunctional purine biosynthesis protein PurH, found in Streptococcus pyogenes serotype M12 (strain MGAS2096).